The following is a 357-amino-acid chain: MVKNNAGIVNMFEKRRTQTTTIPIIEIMREKRSEDLETEIVQGLQFDSLQLPQELLWDDAGQILFDDLCNSSTYYLTKKEKEILQKYSTDMAATIPEGSTLIELGCGSLRKTGILLSALEKSHKAVTYYALDVSQDSLENGLAQLHKGLGCLDHVELRGLWGTYEDAIAWLADQHPINVHNGITFLWMGNSMTNMHLAQAQSLLSRMTKTCIGSGIPCQILVSVDSCSAEDIVMGAYDTDSQPLKDFIMNGLKSANRILGKDVFCASDWTFGTVLDRVRHEVQVFYAPTRDVTIHIDSHPCKITKGEKIAVISSGKWPEPYFRSMLEGIGLQVLDLWRDSDQFYCMNPLPLICSFPG.

This sequence belongs to the methyltransferase superfamily.

The protein operates within alkaloid biosynthesis. Functionally, N-methyltransferase; part of the gene cluster that mediates the biosynthesis of the dimeric diketopiperazine alkaloid ditryptophenaline. The nonribosomal peptide synthase dtpA accepts L-tryptophan and L-phenylalanine as its substrates and forms the phenylalanyl-tryptophanyl cyclic dipeptide product cyclophenylalanyltryptophenyl. The N-methyltransferase dtpB is responsible for the N-methylation of cyclophenylalanyltryptophenyl to yield cyclo-N-methylphenylalanyltryptophenyl. The cytochrome P450 monooxygenase is responsible not only for pyrroloindole ring formation but also for concurrent dimerization of N-methylphenylalanyltryptophanyl diketopiperazine monomers into a homodimeric product. In Aspergillus flavus (strain ATCC 200026 / FGSC A1120 / IAM 13836 / NRRL 3357 / JCM 12722 / SRRC 167), this protein is N-methyltransferase dtpB.